A 493-amino-acid polypeptide reads, in one-letter code: Ectonucleotide pyrophosphatase/phosphodiesterase 2 (493 aa).

At 1 to 28 (MLLFEQPVDLEKNNEDDTNIKPFAISRH) the chain is on the cytoplasmic side. Residues 29–45 (FLLKLLLCGIILIELLL) form a helical; Signal-anchor for type II membrane protein membrane-spanning segment. The Extracellular segment spans residues 46–493 (YSKCPKPIDN…KTKKEKSLLQ (448 aa)). 3 N-linked (GlcNAc...) asparagine glycosylation sites follow: N62, N69, and N112. Residues 76-438 (TLTILISIDG…IGIMGTHGYN (363 aa)) form a phosphodiesterase region. T127 serves as the catalytic Nucleophile. N-linked (GlcNAc...) asparagine glycans are attached at residues N153 and N441.

Belongs to the nucleotide pyrophosphatase/phosphodiesterase family. Post-translationally, autophosphorylated as part of the catalytic cycle of phosphodiesterase/pyrophosphatase activity.

The protein resides in the membrane. The enzyme catalyses Hydrolytically removes 5'-nucleotides successively from the 3'-hydroxy termini of 3'-hydroxy-terminated oligonucleotides.. The catalysed reaction is a ribonucleoside 5'-triphosphate + H2O = a ribonucleoside 5'-phosphate + diphosphate + H(+). It carries out the reaction a 2'-deoxyribonucleoside 5'-triphosphate + H2O = a 2'-deoxyribonucleoside 5'-phosphate + diphosphate + H(+). Functionally, mediates extracellular nucleotide derived phosphate hydrolysis along with NPP1 and PHO5. The chain is Ectonucleotide pyrophosphatase/phosphodiesterase 2 (NPP2) from Saccharomyces cerevisiae (strain ATCC 204508 / S288c) (Baker's yeast).